We begin with the raw amino-acid sequence, 158 residues long: C-type lectin lectoxin-Enh4 (158 aa).

A signal peptide spans 1–23 (MGQFTVVSLGLLAMFLSLSGAKG). Cystine bridges form between C26–C37, C54–C154, and C129–C146. The C-type lectin domain maps to 33–155 (RNGVCNKLFP…CASLHPFICQ (123 aa)). Positions 119-121 (EPN) match the Mannose-binding motif. Positions 127, 142, and 143 each coordinate Ca(2+).

This sequence belongs to the true venom lectin family. Expressed by the venom gland.

It is found in the secreted. Its function is as follows. Mannose-binding lectin which recognizes specific carbohydrate structures and agglutinates a variety of animal cells by binding to cell-surface glycoproteins and glycolipids. May be a calcium-dependent lectin. In Pseudoferania polylepis (Macleay's water snake), this protein is C-type lectin lectoxin-Enh4.